The primary structure comprises 389 residues: tRNA (cytosine(72)-C(5))-methyltransferase (389 aa).

A PUA domain is found at 92 to 167 (LPVVVANKYA…LAVEVTLPKF (76 aa)). S-adenosyl-L-methionine-binding positions include 209-215 (AAAPGGK), D233, R238, D260, D277, and Y304. C327 serves as the catalytic Nucleophile.

The protein belongs to the class I-like SAM-binding methyltransferase superfamily. RsmB/NOP family.

It carries out the reaction cytidine(72) in tRNA + S-adenosyl-L-methionine = 5-methylcytidine(72) in tRNA + S-adenosyl-L-homocysteine + H(+). It catalyses the reaction cytidine(72) in tRNA(Thr) + S-adenosyl-L-methionine = 5-methylcytidine(72) in tRNA(Thr) + S-adenosyl-L-homocysteine + H(+). The enzyme catalyses cytidine(72) in tRNA(Cys) + S-adenosyl-L-methionine = 5-methylcytidine(72) in tRNA(Cys) + S-adenosyl-L-homocysteine + H(+). Its function is as follows. S-adenosyl-L-methionine-dependent methyltransferase that specifically methylates the C5 position of cytosine 72 in several tRNAs. This modification appears to slightly promote the thermal stability of P.horikoshii tRNAs, but does not affect their amino acid accepting activity. Four elements in the acceptor stems of tRNAs are essential for substrate recognition by this enzyme: the target site C72, the 3'-CCA terminus, U73 or G73, and the second base pair C2:G71. The protein is tRNA (cytosine(72)-C(5))-methyltransferase of Pyrococcus horikoshii (strain ATCC 700860 / DSM 12428 / JCM 9974 / NBRC 100139 / OT-3).